A 565-amino-acid chain; its full sequence is MPPKAADGRRPSPDGGLGGFVPFPADRAASYRAAGYWSGRTLDTVLSDAARRWPDRLAVADAGDRPGHGGLSYAELDQRADRAAAALHGLGITPGDRVLLQLPNGCQFAVALFALLRAGAIPVMCLPGHRAAELGHFAAVSAATGLVVADVASGFDYRPMARELVADHPTLRHVIVDGDPGPFVSWAQLCAQAGTGSPAPPADPGSPALLLVSGGTTGMPKLIPRTHDDYVFNATASAALCRLSADDVYLVVLAAGHNFPLACPGLLGAMTVGATAVFAPDPSPEAAFAAIERHGVTVTALVPALAKLWAQSCEWEPVTPKSLRLLQVGGSKLEPEDARRVRTALTPGLQQVFGMAEGLLNFTRIGDPPEVVEHTQGRPLCPADELRIVNADGEPVGPGEEGELLVRGPYTLNGYFAAERDNERCFDPDGFYRSGDLVRRRDDGNLVVTGRVKDVICRAGETIAASDLEEQLLSHPAIFSAAAVGLPDQYLGEKICAAVVFAGAPITLAELNGYLDRRGVAAHTRPDQLVAMPALPTTPIGKIDKRAIVRQLGIATGPVTTQRCH.

Positions 214, 330, 352, 436, 451, and 542 each coordinate ATP.

The protein belongs to the ATP-dependent AMP-binding enzyme family.

It catalyses the reaction salicylate + ATP + H(+) = 2-hydroxybenzoyl-5'-AMP + diphosphate. It carries out the reaction 2-hydroxybenzoyl-5'-AMP + holo-[ACP] = salicyl-[ACP] + AMP + H(+). Its pathway is siderophore biosynthesis; mycobactin biosynthesis. Its activity is regulated as follows. Inhibited by salicyl-AMS, an acyl-AMP analog. Also inhibited by 5'-O-[(N-acyl)sulfamoyl]adenosines. In terms of biological role, involved in the initial steps of the mycobactin biosynthetic pathway. Catalyzes the salicylation of the aryl carrier protein (ArCP) domain of MbtB through a two-step reaction. The first step is the ATP-dependent adenylation of salicylate to generate a salicyl-AMP intermediate. The second step is the transfer of this activated salicylate to MbtB to form a salicyl-ArCP domain thioester. The sequence is that of Salicyl-AMP ligase / salicyl-S-ArCP synthetase from Mycobacterium tuberculosis (strain ATCC 25618 / H37Rv).